The sequence spans 334 residues: 6-phosphogluconolactonase (334 aa).

The protein belongs to the cycloisomerase 2 family.

The catalysed reaction is 6-phospho-D-glucono-1,5-lactone + H2O = 6-phospho-D-gluconate + H(+). Its pathway is carbohydrate degradation; pentose phosphate pathway; D-ribulose 5-phosphate from D-glucose 6-phosphate (oxidative stage): step 2/3. Functionally, catalyzes the hydrolysis of 6-phosphogluconolactone to 6-phosphogluconate. This is 6-phosphogluconolactonase from Buchnera aphidicola subsp. Acyrthosiphon pisum (strain APS) (Acyrthosiphon pisum symbiotic bacterium).